Here is a 375-residue protein sequence, read N- to C-terminus: tRNA-specific 2-thiouridylase MnmA (375 aa).

ATP is bound by residues Ala20–Ser27 and Leu46. The Nucleophile role is filled by Cys114. Cys114 and Cys211 are oxidised to a cystine. Gly138 serves as a coordination point for ATP. Residues Arg160–Gln162 are interaction with tRNA. Cys211 functions as the Cysteine persulfide intermediate in the catalytic mechanism.

This sequence belongs to the MnmA/TRMU family.

It localises to the cytoplasm. It carries out the reaction S-sulfanyl-L-cysteinyl-[protein] + uridine(34) in tRNA + AH2 + ATP = 2-thiouridine(34) in tRNA + L-cysteinyl-[protein] + A + AMP + diphosphate + H(+). In terms of biological role, catalyzes the 2-thiolation of uridine at the wobble position (U34) of tRNA, leading to the formation of s(2)U34. This Ruegeria pomeroyi (strain ATCC 700808 / DSM 15171 / DSS-3) (Silicibacter pomeroyi) protein is tRNA-specific 2-thiouridylase MnmA.